The following is a 1021-amino-acid chain: INO80 complex subunit D (1021 aa).

Lys87 participates in a covalent cross-link: Glycyl lysine isopeptide (Lys-Gly) (interchain with G-Cter in SUMO2). Position 132 is a phosphoserine (Ser132). 5 disordered regions span residues 194–239 (FSTP…PMQG), 514–570 (RGDN…SMPT), 808–844 (RQQYSSDHSHSSPHGSHYDSEHVPSPYSDHITSPHTS), 911–940 (SLSTPPTTSNSETTQPAFATVTPSSSSVLP), and 976–1021 (QLSS…PSPN). Residues 224 to 239 (VCKSPQPQNTSLPMQG) are compositionally biased toward polar residues. Positions 520 to 554 (KVQHQQQRKPRKKTKPPALTKKHKKKRRRGPRRPQ) are enriched in basic residues. Positions 911-926 (SLSTPPTTSNSETTQP) are enriched in low complexity. The span at 931-940 (VTPSSSSVLP) shows a compositional bias: polar residues. The span at 995–1014 (APPTGFTATGATATSTNNAS) shows a compositional bias: low complexity.

The protein belongs to the INO80D family. Component of the chromatin remodeling INO80 complex; specifically part of a complex module associated with the N-terminus of INO80.

It localises to the nucleus. Its function is as follows. Putative regulatory component of the chromatin remodeling INO80 complex which is involved in transcriptional regulation, DNA replication and probably DNA repair. This is INO80 complex subunit D from Mus musculus (Mouse).